Reading from the N-terminus, the 1653-residue chain is Clathrin heavy chain (1653 aa).

The segment at 1 to 483 is globular terminal domain; that stretch reads MSDLPIEFTE…FDTTLALACY (483 aa). WD40-like repeat regions lie at residues 23–66, 67–107, 108–152, 153–198, 199–263, 264–307, and 308–336; these read FLDF…KNMG, GDSA…LDEP, VIFW…ANLN, NTQI…QAID, GHVA…PDAT, NDFP…ITAE, and SVFT…VEIS. The interval 453 to 469 is binding site for the uncoating ATPase, involved in lattice disassembly; that stretch reads EKWLKEDKLECSEELGD. Positions 484 to 527 are flexible linker; it reads LRAGAHAKVISCLAELQQFEKIIPYCQKVGYQPNFLVLISSLIR. The tract at residues 528-1653 is heavy chain arm; sequence SSPDRASEFA…SAMNVQPTGF (1126 aa). CHCR repeat units follow at residues 543–689, 692–834, 839–978, 985–1130, 1134–1275, 1280–1426, and 1429–1572; these read NPET…QTVV, ATKF…DEAF, LQSV…QLID, IPEL…IPDA, YIKA…FKLA, LNLI…SLLV, and LTSL…REGF. Lysine 1107 participates in a covalent cross-link: Glycyl lysine isopeptide (Lys-Gly) (interchain with G-Cter in ubiquitin). An involved in binding clathrin light chain region spans residues 1219–1528; sequence AARLCYSAVS…LLYRRNKKWA (310 aa).

It belongs to the clathrin heavy chain family. Clathrin triskelions, composed of 3 heavy chains and 3 light chains, are the basic subunits of the clathrin coat. Interacts with the auxilin-like clathrin uncoating factor SWA2. Interacts with INP53.

The protein resides in the cytoplasmic vesicle membrane. It is found in the membrane. Its subcellular location is the coated pit. Functionally, clathrin is the major protein of the polyhedral coat of coated pits and vesicles. In yeast, it is involved in the retention of proteins in an intracellular membrane compartment, presumably the trans-Golgi. The sequence is that of Clathrin heavy chain (CHC1) from Saccharomyces cerevisiae (strain ATCC 204508 / S288c) (Baker's yeast).